A 388-amino-acid chain; its full sequence is MKSLSLLALAAIAPPAAVAAVVDRQVPFENRPVQGLPEKFLIQLGPEQTRWVTEDEKWALKMEGVNFFDITAEPDRGFSAKSHERIQVSFPSEVKHQTELAPLLEQLSKDNMRQNLVHFTSFHTRYYKSETGVQSATWLFEQVEEAIQDSGAAQHAVKVERFEHSWGQFSIIATIPGRTNKTVVIGAHQDSINLFLPSILPAPGADDDGSGTVTILEAFRVLLQSEAVQQGNAANTIEFHWYSAEEAGLLGSQAIFSDYSKTGRDIKAMLQQDMTGYVEGTTKAGEVESVGVITDFVDPGLTEFIKRVITGYCTIPFVLTQCGYACSDHASASRYGYPSAFVIESEFKRSNQRIHTTGDTVDLLSFDHMLQHARMTLAFAYELAFAEL.

The N-terminal stretch at 1–19 is a signal peptide; the sequence is MKSLSLLALAAIAPPAAVA. The propeptide occupies 20 to 88; the sequence is AVVDRQVPFE…SAKSHERIQV (69 aa). The N-linked (GlcNAc...) asparagine glycan is linked to asparagine 180. Histidine 188, aspartate 207, glutamate 246, and aspartate 273 together coordinate Zn(2+). A disulfide bridge links cysteine 322 with cysteine 326. Histidine 355 contacts Zn(2+).

This sequence belongs to the peptidase M28 family. M28E subfamily. As to quaternary structure, monomer. Zn(2+) serves as cofactor.

It is found in the secreted. In terms of biological role, extracellular aminopeptidase that allows assimilation of proteinaceous substrates. This chain is Leucine aminopeptidase 1 (LAP1), found in Coccidioides posadasii (strain C735) (Valley fever fungus).